The chain runs to 393 residues: Pre-mRNA splicing factor SR-like 1 (393 aa).

Positions 173 to 393 (MNLPTKPSGS…VIKLGGSSWR (221 aa)) are disordered. The segment covering 249–312 (QSRDYYSDRD…RNDYEDDRSR (64 aa)) has biased composition (basic and acidic residues). A Nuclear localization signal motif is present at residues 301–308 (SRRNDYED). Over residues 313-325 (HDRRSRSRSRSRS) the composition is skewed to basic residues. Basic and acidic residues-rich tracts occupy residues 329-346 (QIER…KEKS) and 356-385 (KLKD…EEVI).

It belongs to the PRP38 family. Phosphorylated. As to expression, mostly expressed in siliques and leaves, also present in seedlings, flowers and stems, and, at low levels, in roots.

It localises to the nucleus. Functionally, may be required for pre-mRNA splicing. Confers salt tolerance to LiCl and NaCl. In Arabidopsis thaliana (Mouse-ear cress), this protein is Pre-mRNA splicing factor SR-like 1.